Consider the following 195-residue polypeptide: ATP-dependent Clp protease proteolytic subunit (195 aa).

Residue S97 is the Nucleophile of the active site. H122 is an active-site residue.

The protein belongs to the peptidase S14 family. As to quaternary structure, fourteen ClpP subunits assemble into 2 heptameric rings which stack back to back to give a disk-like structure with a central cavity, resembling the structure of eukaryotic proteasomes.

Its subcellular location is the cytoplasm. The catalysed reaction is Hydrolysis of proteins to small peptides in the presence of ATP and magnesium. alpha-casein is the usual test substrate. In the absence of ATP, only oligopeptides shorter than five residues are hydrolyzed (such as succinyl-Leu-Tyr-|-NHMec, and Leu-Tyr-Leu-|-Tyr-Trp, in which cleavage of the -Tyr-|-Leu- and -Tyr-|-Trp bonds also occurs).. In terms of biological role, cleaves peptides in various proteins in a process that requires ATP hydrolysis. Has a chymotrypsin-like activity. Plays a major role in the degradation of misfolded proteins. This is ATP-dependent Clp protease proteolytic subunit from Lactobacillus gasseri (strain ATCC 33323 / DSM 20243 / BCRC 14619 / CIP 102991 / JCM 1131 / KCTC 3163 / NCIMB 11718 / NCTC 13722 / AM63).